Here is a 109-residue protein sequence, read N- to C-terminus: Ribonuclease P protein component (109 aa).

This sequence belongs to the RnpA family. As to quaternary structure, consists of a catalytic RNA component (M1 or rnpB) and a protein subunit.

The enzyme catalyses Endonucleolytic cleavage of RNA, removing 5'-extranucleotides from tRNA precursor.. RNaseP catalyzes the removal of the 5'-leader sequence from pre-tRNA to produce the mature 5'-terminus. It can also cleave other RNA substrates such as 4.5S RNA. The protein component plays an auxiliary but essential role in vivo by binding to the 5'-leader sequence and broadening the substrate specificity of the ribozyme. This chain is Ribonuclease P protein component, found in Mycoplasma capricolum subsp. capricolum (strain California kid / ATCC 27343 / NCTC 10154).